The primary structure comprises 462 residues: Argininosuccinate lyase (462 aa).

This sequence belongs to the lyase 1 family. Argininosuccinate lyase subfamily.

It localises to the cytoplasm. The catalysed reaction is 2-(N(omega)-L-arginino)succinate = fumarate + L-arginine. The protein operates within amino-acid biosynthesis; L-arginine biosynthesis; L-arginine from L-ornithine and carbamoyl phosphate: step 3/3. This chain is Argininosuccinate lyase, found in Bacillus anthracis (strain A0248).